The following is a 509-amino-acid chain: 2,3-bisphosphoglycerate-independent phosphoglycerate mutase (509 aa).

Mn(2+)-binding residues include D12 and S62. Residue S62 is the Phosphoserine intermediate of the active site. Substrate contacts are provided by residues H123, 153–154, R185, R191, 260–263, and K333; these read RD and RPDR. Residues D400, H404, D441, H442, and H460 each contribute to the Mn(2+) site.

The protein belongs to the BPG-independent phosphoglycerate mutase family. In terms of assembly, monomer. It depends on Mn(2+) as a cofactor.

It catalyses the reaction (2R)-2-phosphoglycerate = (2R)-3-phosphoglycerate. Its pathway is carbohydrate degradation; glycolysis; pyruvate from D-glyceraldehyde 3-phosphate: step 3/5. Functionally, catalyzes the interconversion of 2-phosphoglycerate and 3-phosphoglycerate. This Clostridium botulinum (strain ATCC 19397 / Type A) protein is 2,3-bisphosphoglycerate-independent phosphoglycerate mutase.